The primary structure comprises 376 residues: Ribonucleoside-diphosphate reductase subunit beta (376 aa).

The Fe cation site is built by Asp-85, Glu-116, and His-119. Tyr-123 is a catalytic residue. The Fe cation site is built by Glu-205, Glu-239, and His-242.

It belongs to the ribonucleoside diphosphate reductase small chain family. In terms of assembly, tetramer of two alpha and two beta subunits. Fe cation serves as cofactor.

It catalyses the reaction a 2'-deoxyribonucleoside 5'-diphosphate + [thioredoxin]-disulfide + H2O = a ribonucleoside 5'-diphosphate + [thioredoxin]-dithiol. Its function is as follows. Provides the precursors necessary for DNA synthesis. Catalyzes the biosynthesis of deoxyribonucleotides from the corresponding ribonucleotides. The sequence is that of Ribonucleoside-diphosphate reductase subunit beta (nrdB) from Buchnera aphidicola subsp. Schizaphis graminum (strain Sg).